A 622-amino-acid chain; its full sequence is Chaperone protein HscA homolog (622 aa).

Belongs to the heat shock protein 70 family.

Functionally, chaperone involved in the maturation of iron-sulfur cluster-containing proteins. Has a low intrinsic ATPase activity which is markedly stimulated by HscB. This chain is Chaperone protein HscA homolog, found in Acidovorax ebreus (strain TPSY) (Diaphorobacter sp. (strain TPSY)).